We begin with the raw amino-acid sequence, 234 residues long: LexA repressor (234 aa).

The interval 1 to 29 is disordered; the sequence is MSDAANPEGHKRSLPGRPPGIRADSSGLT. Residues 52 to 72 constitute a DNA-binding region (H-T-H motif); that stretch reads MREIGQAVGLSSTSSVAHQLM. Residues 90 to 109 form a disordered region; sequence YEVRGSDQAASVQPTDTAGK. Catalysis depends on for autocatalytic cleavage activity residues Ser-158 and Lys-195.

This sequence belongs to the peptidase S24 family. As to quaternary structure, homodimer.

It catalyses the reaction Hydrolysis of Ala-|-Gly bond in repressor LexA.. Its function is as follows. Represses a number of genes involved in the response to DNA damage (SOS response), including recA and lexA. In the presence of single-stranded DNA, RecA interacts with LexA causing an autocatalytic cleavage which disrupts the DNA-binding part of LexA, leading to derepression of the SOS regulon and eventually DNA repair. The chain is LexA repressor from Streptomyces coelicolor (strain ATCC BAA-471 / A3(2) / M145).